The chain runs to 94 residues: Co-chaperonin GroES (94 aa).

Belongs to the GroES chaperonin family. In terms of assembly, heptamer of 7 subunits arranged in a ring. Interacts with the chaperonin GroEL.

Its subcellular location is the cytoplasm. Functionally, together with the chaperonin GroEL, plays an essential role in assisting protein folding. The GroEL-GroES system forms a nano-cage that allows encapsulation of the non-native substrate proteins and provides a physical environment optimized to promote and accelerate protein folding. GroES binds to the apical surface of the GroEL ring, thereby capping the opening of the GroEL channel. The polypeptide is Co-chaperonin GroES (Geobacillus sp. (strain WCH70)).